A 251-amino-acid chain; its full sequence is Xylose/arabinose import ATP-binding protein XylG (251 aa).

An ABC transporter domain is found at 5–241 (LEIRDVHKSF…EITEVMTSFA (237 aa)). ATP is bound at residue 37 to 44 (GDNGAGKS).

This sequence belongs to the ABC transporter superfamily. As to quaternary structure, the complex is composed of two ATP-binding proteins (XylG), two transmembrane proteins (XylH) and a solute-binding protein (XylF).

The protein localises to the cell membrane. It carries out the reaction D-xylose(out) + ATP + H2O = D-xylose(in) + ADP + phosphate + H(+). The enzyme catalyses L-arabinose(out) + ATP + H2O = L-arabinose(in) + ADP + phosphate + H(+). Its function is as follows. Part of the ABC transporter complex XylFGH involved in the uptake of xylose and arabinose. Responsible for energy coupling to the transport system. The polypeptide is Xylose/arabinose import ATP-binding protein XylG (Sulfolobus acidocaldarius (strain ATCC 33909 / DSM 639 / JCM 8929 / NBRC 15157 / NCIMB 11770)).